The primary structure comprises 63 residues: ComG operon repressor (63 aa).

Negatively regulates the transcription of the comG operon. The polypeptide is ComG operon repressor (comZ) (Bacillus subtilis (strain 168)).